Reading from the N-terminus, the 392-residue chain is DNA polymerase IV (392 aa).

Residues 6–186 (IVHLDADAFF…LPIGKLPGVG (181 aa)) form the UmuC domain. Residues aspartate 10 and aspartate 103 each coordinate Mg(2+). Glutamate 104 is an active-site residue.

Belongs to the DNA polymerase type-Y family. As to quaternary structure, monomer. Requires Mg(2+) as cofactor.

It is found in the cytoplasm. It catalyses the reaction DNA(n) + a 2'-deoxyribonucleoside 5'-triphosphate = DNA(n+1) + diphosphate. Its function is as follows. Poorly processive, error-prone DNA polymerase involved in untargeted mutagenesis. Copies undamaged DNA at stalled replication forks, which arise in vivo from mismatched or misaligned primer ends. These misaligned primers can be extended by PolIV. Exhibits no 3'-5' exonuclease (proofreading) activity. May be involved in translesional synthesis, in conjunction with the beta clamp from PolIII. This Opitutus terrae (strain DSM 11246 / JCM 15787 / PB90-1) protein is DNA polymerase IV.